Consider the following 299-residue polypeptide: Acetylglutamate kinase (299 aa).

Substrate contacts are provided by residues 70 to 71 (GG), R92, and N186.

Belongs to the acetylglutamate kinase family. ArgB subfamily.

The protein localises to the cytoplasm. The catalysed reaction is N-acetyl-L-glutamate + ATP = N-acetyl-L-glutamyl 5-phosphate + ADP. Its pathway is amino-acid biosynthesis; L-arginine biosynthesis; N(2)-acetyl-L-ornithine from L-glutamate: step 2/4. Its function is as follows. Catalyzes the ATP-dependent phosphorylation of N-acetyl-L-glutamate. The sequence is that of Acetylglutamate kinase from Thermoanaerobacter sp. (strain X514).